A 304-amino-acid polypeptide reads, in one-letter code: HTH-type transcriptional regulator AdmX (304 aa).

Residues 1–58 (MKLRHLEIFYTVMTCGSLSRAAESLNISQPAASKSLKNAELKLGFKLFQRVRGKLLPS) form the HTH lysR-type domain. The H-T-H motif DNA-binding region spans 18–37 (LSRAAESLNISQPAASKSLK).

Belongs to the LysR transcriptional regulatory family.

It localises to the cytoplasm. AdmX-mediated transcription is inhibited by indole-3-acetic and indole-3-pyruvic acids. AdmX recognizes and binds the auxin indole-3-acetic acid (IAA), which causes conformational changes in AdmX that result in the inhibition of the expression of the andrimid gene cluster and the suppression of antibiotic production. It also recognizes indole-3-pyruvic acid (IPA), an intermediate of the main IAA biosynthetic pathway in plants and plant beneficial bacteria, which also prevents andrimid synthesis, but to a much lesser extent. Its function is as follows. Positively regulates the biosynthesis of andrimid, a broad-spectrum antibiotic, by activating the expression of the adm biosynthetic gene cluster. It specifically binds to a region within the adm promoter. The polypeptide is HTH-type transcriptional regulator AdmX (Serratia plymuthica).